The sequence spans 145 residues: 3-dehydroquinate dehydratase (145 aa).

Tyrosine 24 functions as the Proton acceptor in the catalytic mechanism. Positions 75, 81, and 88 each coordinate substrate. The active-site Proton donor is the histidine 101. Residues 102-103 (IS) and arginine 112 contribute to the substrate site.

The protein belongs to the type-II 3-dehydroquinase family. As to quaternary structure, homododecamer.

It catalyses the reaction 3-dehydroquinate = 3-dehydroshikimate + H2O. The protein operates within metabolic intermediate biosynthesis; chorismate biosynthesis; chorismate from D-erythrose 4-phosphate and phosphoenolpyruvate: step 3/7. Functionally, catalyzes a trans-dehydration via an enolate intermediate. This is 3-dehydroquinate dehydratase (aroQ) from Corynebacterium glutamicum (strain ATCC 13032 / DSM 20300 / JCM 1318 / BCRC 11384 / CCUG 27702 / LMG 3730 / NBRC 12168 / NCIMB 10025 / NRRL B-2784 / 534).